A 233-amino-acid chain; its full sequence is tRNA (guanine-N(7)-)-methyltransferase (233 aa).

S-adenosyl-L-methionine-binding residues include E65, E90, D117, and D139. The active site involves D139. Residues K143, D175, and 212 to 215 (TRYE) contribute to the substrate site.

The protein belongs to the class I-like SAM-binding methyltransferase superfamily. TrmB family.

It carries out the reaction guanosine(46) in tRNA + S-adenosyl-L-methionine = N(7)-methylguanosine(46) in tRNA + S-adenosyl-L-homocysteine. It functions in the pathway tRNA modification; N(7)-methylguanine-tRNA biosynthesis. In terms of biological role, catalyzes the formation of N(7)-methylguanine at position 46 (m7G46) in tRNA. This Roseobacter denitrificans (strain ATCC 33942 / OCh 114) (Erythrobacter sp. (strain OCh 114)) protein is tRNA (guanine-N(7)-)-methyltransferase.